We begin with the raw amino-acid sequence, 317 residues long: Ribonuclease Z (317 aa).

Residues His62, His64, Asp66, His67, His139, Asp210, and His268 each contribute to the Zn(2+) site. Asp66 functions as the Proton acceptor in the catalytic mechanism.

Belongs to the RNase Z family. In terms of assembly, homodimer. The cofactor is Zn(2+).

It catalyses the reaction Endonucleolytic cleavage of RNA, removing extra 3' nucleotides from tRNA precursor, generating 3' termini of tRNAs. A 3'-hydroxy group is left at the tRNA terminus and a 5'-phosphoryl group is left at the trailer molecule.. In terms of biological role, zinc phosphodiesterase, which displays some tRNA 3'-processing endonuclease activity. Probably involved in tRNA maturation, by removing a 3'-trailer from precursor tRNA. This chain is Ribonuclease Z, found in Picosynechococcus sp. (strain ATCC 27264 / PCC 7002 / PR-6) (Agmenellum quadruplicatum).